The following is a 397-amino-acid chain: uncharacterized protein (397 aa).

[4Fe-4S] cluster-binding residues include cysteine 47, cysteine 53, cysteine 56, and cysteine 131. Positions 235, 262, 282, and 328 each coordinate S-adenosyl-L-methionine. The active-site Nucleophile is cysteine 354.

This sequence belongs to the class I-like SAM-binding methyltransferase superfamily. RNA M5U methyltransferase family.

This is an uncharacterized protein from Zymomonas mobilis subsp. mobilis (strain ATCC 31821 / ZM4 / CP4).